A 238-amino-acid chain; its full sequence is MGKVYLVGAGPGDPDLITLKGLKAIQQADVILYDRLVNKDLLEYAKSDADIIYCGKLPNYHTLKQETINNFLVKFAKKGKIVTRLKGGDPFVFGRGGEEAEALVQQGISFEIVPGITSGIAAAAYAGIPVTHREYSASFAFVAGHRKDSKHDAIKWDSLAKGVDTLAIYMGVRNLPYICQQLMKHGKTSATPIALIHWGTCADQRTVTGTLGTIVDIVKEEQIENPSMIIVGEVVNFS.

S-adenosyl-L-homocysteine-binding positions include P11, 87-89, 117-118, and M170; these read GGD and TS.

The protein belongs to the precorrin methyltransferase family. In terms of assembly, monomer.

The catalysed reaction is uroporphyrinogen III + 2 S-adenosyl-L-methionine = precorrin-2 + 2 S-adenosyl-L-homocysteine + H(+). It functions in the pathway cofactor biosynthesis; adenosylcobalamin biosynthesis; precorrin-2 from uroporphyrinogen III: step 1/1. It participates in porphyrin-containing compound metabolism; siroheme biosynthesis; precorrin-2 from uroporphyrinogen III: step 1/1. With respect to regulation, SUMT exhibits a substrate inhibition phenomenon at uroporphyrinogen III concentrations above 0.5 uM; this property might play a regulatory role in cobalamin biosynthesis. Functionally, catalyzes the two successive C-2 and C-7 methylation reactions involved in the conversion of uroporphyrinogen III to precorrin-2 via the intermediate formation of precorrin-1. It is a step in the biosynthesis of both cobalamin (vitamin B12) and siroheme. In Priestia megaterium (Bacillus megaterium), this protein is Uroporphyrinogen-III C-methyltransferase.